A 337-amino-acid chain; its full sequence is Glyceraldehyde-3-phosphate dehydrogenase (337 aa).

NAD(+)-binding positions include 12-13 (RI), Asp-34, and Arg-79. D-glyceraldehyde 3-phosphate-binding positions include 150–152 (SCT), Thr-181, 210–211 (TG), and Arg-233. Cys-151 acts as the Nucleophile in catalysis. Residue Asn-315 participates in NAD(+) binding.

This sequence belongs to the glyceraldehyde-3-phosphate dehydrogenase family. Homotetramer.

Its subcellular location is the cytoplasm. The catalysed reaction is D-glyceraldehyde 3-phosphate + phosphate + NAD(+) = (2R)-3-phospho-glyceroyl phosphate + NADH + H(+). It functions in the pathway carbohydrate degradation; glycolysis; pyruvate from D-glyceraldehyde 3-phosphate: step 1/5. This chain is Glyceraldehyde-3-phosphate dehydrogenase, found in Cryphonectria parasitica (Chestnut blight fungus).